The sequence spans 131 residues: Small ribosomal subunit protein uS8 (131 aa).

The protein belongs to the universal ribosomal protein uS8 family. As to quaternary structure, part of the 30S ribosomal subunit. Contacts proteins S5 and S12.

In terms of biological role, one of the primary rRNA binding proteins, it binds directly to 16S rRNA central domain where it helps coordinate assembly of the platform of the 30S subunit. This chain is Small ribosomal subunit protein uS8, found in Chlorobium phaeobacteroides (strain DSM 266 / SMG 266 / 2430).